Consider the following 118-residue polypeptide: Large ribosomal subunit protein bL17 (118 aa).

Belongs to the bacterial ribosomal protein bL17 family. Part of the 50S ribosomal subunit. Contacts protein L32.

The chain is Large ribosomal subunit protein bL17 from Phytoplasma mali (strain AT).